The chain runs to 970 residues: Vacuolar membrane protease (970 aa).

Polar residues predominate over residues 1–12; the sequence is MTTADSNSSATR. The disordered stretch occupies residues 1 to 35; it reads MTTADSNSSATRGSHEMADGSNRVPNDEPYHRKSP. At 1–56 the chain is on the cytoplasmic side; the sequence is MTTADSNSSATRGSHEMADGSNRVPNDEPYHRKSPESCENANFFVRAMRASFGYRK. Positions 25 to 35 are enriched in basic and acidic residues; that stretch reads PNDEPYHRKSP. A helical membrane pass occupies residues 57–77; sequence TSLTILVFLSVIATVLLSYYD. At 78–397 the chain is on the vacuolar side; the sequence is SSLEFSVSLP…FVVPMTFVFG (320 aa). N146 and N173 each carry an N-linked (GlcNAc...) asparagine glycan. Positions 187 and 199 each coordinate Zn(2+). The active-site Proton acceptor is E234. 3 residues coordinate Zn(2+): E235, E260, and H333. A helical transmembrane segment spans residues 398 to 418; it reads VNVLLMVLVPLVSLISLALIF. Residues 419–423 lie on the Cytoplasmic side of the membrane; the sequence is AHRKW. A helical membrane pass occupies residues 424–444; it reads SVSLVTFFKFPLSFILSIFLL. The Vacuolar segment spans residues 445-465; it reads DNFSSWFVVSVNNFLPNSSAG. N446 and N461 each carry an N-linked (GlcNAc...) asparagine glycan. A helical membrane pass occupies residues 466–486; that stretch reads IIALTYFSFFVLANYLLLNGI. Over 487 to 502 the chain is Cytoplasmic; it reads NLLFWKFKGTRHDEKL. Residues 503–523 form a helical membrane-spanning segment; it reads VVILQISFMFWVSLIWSTANI. At 524-535 the chain is on the vacuolar side; sequence AKSQFNGEHSGE. The chain crosses the membrane as a helical span at residues 536 to 556; the sequence is FLLTLLYILQAAGGVFGLLCW. At 557 to 620 the chain is on the cytoplasmic side; it reads LFKRSRTVHT…PTKHYSYDWS (64 aa). Residues 621 to 641 traverse the membrane as a helical segment; that stretch reads IQFLFIVPISSFLSYNYGWLI. The Vacuolar segment spans residues 642-658; sequence LEGLKKTLQESATSEYL. A helical membrane pass occupies residues 659–679; that stretch reads VFRALKLLAVVVAVPYLPFIF. Over 680-683 the chain is Cytoplasmic; sequence KVNR. Residues 684–704 traverse the membrane as a helical segment; sequence IVFLVTIFLFVYGLGAIVISE. At 705–970 the chain is on the vacuolar side; that stretch reads PFTEANPLKL…LVNVKKSVLV (266 aa). Residues N738, N797, and N877 are each glycosylated (N-linked (GlcNAc...) asparagine).

Belongs to the peptidase M28 family. Zn(2+) serves as cofactor.

It localises to the vacuole membrane. Functionally, may be involved in vacuolar sorting and osmoregulation. This is Vacuolar membrane protease from Meyerozyma guilliermondii (strain ATCC 6260 / CBS 566 / DSM 6381 / JCM 1539 / NBRC 10279 / NRRL Y-324) (Yeast).